The sequence spans 130 residues: Small ribosomal subunit protein uS8 (130 aa).

The protein belongs to the universal ribosomal protein uS8 family. Part of the 30S ribosomal subunit. Contacts proteins S5 and S12.

In terms of biological role, one of the primary rRNA binding proteins, it binds directly to 16S rRNA central domain where it helps coordinate assembly of the platform of the 30S subunit. The polypeptide is Small ribosomal subunit protein uS8 (Marinomonas sp. (strain MWYL1)).